Here is a 981-residue protein sequence, read N- to C-terminus: Beta-glucuronidase (981 aa).

E500 (nucleophile) is an active-site residue. Residues N561, W562, I563, S581, and E583 each coordinate Mg(2+).

This sequence belongs to the glycosyl hydrolase 2 family.

It localises to the periplasm. The enzyme catalyses a beta-D-glucuronoside + H2O = D-glucuronate + an alcohol. Beta-glucuronidase involved in ulvan degradation. Ulvan is the main polysaccharide component of the Ulvales (green seaweed) cell wall. It is composed of disaccharide building blocks comprising 3-sulfated rhamnose (Rha3S) linked to D-glucuronic acid (GlcA), L-iduronic acid (IduA), or D-xylose (Xyl). Beta-glucuronidase removes GlcA side chains present on some O2 residues of Rha3S. Can remove the GlcA side chains from polymeric ulvan or from smaller oligomers. The chain is Beta-glucuronidase from Formosa agariphila (strain DSM 15362 / KCTC 12365 / LMG 23005 / KMM 3901 / M-2Alg 35-1).